We begin with the raw amino-acid sequence, 354 residues long: MSKVKSITRESWILSTFPEWGSWLNEEIEQEQVAPGTFAMWWLGCTGIWLKSEGGTNVCVDFWCDTGKQSHGNPLMKQGHQMQRMAGVKKLQPNLRTNPFVLDPFAIRQIDAVLANHDHNDHIDVNVAAAVMQNCADDVPFIGPKTCVDLWIGWGVPKERCIVVKPGDVVKVKDIEIHALDAFDRTALITLPADQKAAGILPDGMDDRAVNYLFKTPGGSLYHSGDSHYSNYYAKHGNEHQIDVALGSYGENPRGITDKMTSADMLRMGEALNAKVVIPFHHDIWSNFQADPQEIRVLWEMKKDRLKYGFKPFIWQVGGKFTWPLDKDNFEYHYPRGFDDCFTIEPDLPFKSFL.

This sequence belongs to the UlaG family. A divalent metal cation is required as a cofactor.

The protein localises to the cytoplasm. The catalysed reaction is L-ascorbate 6-phosphate + H2O = 3-dehydro-L-gulonate 6-phosphate. It participates in cofactor degradation; L-ascorbate degradation; D-xylulose 5-phosphate from L-ascorbate: step 1/4. Functionally, probably catalyzes the hydrolysis of L-ascorbate-6-P into 3-keto-L-gulonate-6-P. Is essential for L-ascorbate utilization under anaerobic conditions. The protein is Probable L-ascorbate-6-phosphate lactonase UlaG of Shigella dysenteriae serotype 1 (strain Sd197).